We begin with the raw amino-acid sequence, 205 residues long: Ribosomal RNA small subunit methyltransferase G (205 aa).

Residues glycine 76, leucine 81, 127–128, and arginine 140 each bind S-adenosyl-L-methionine; that span reads IE.

The protein belongs to the methyltransferase superfamily. RNA methyltransferase RsmG family.

It is found in the cytoplasm. The enzyme catalyses guanosine(527) in 16S rRNA + S-adenosyl-L-methionine = N(7)-methylguanosine(527) in 16S rRNA + S-adenosyl-L-homocysteine. Specifically methylates the N7 position of guanine in position 527 of 16S rRNA. The sequence is that of Ribosomal RNA small subunit methyltransferase G from Francisella tularensis subsp. tularensis (strain FSC 198).